The primary structure comprises 545 residues: Chaperonin GroEL (545 aa).

Residues 30-33, K51, 87-91, G415, and D495 each bind ATP; these read TLGP and DGTTT.

This sequence belongs to the chaperonin (HSP60) family. In terms of assembly, forms a cylinder of 14 subunits composed of two heptameric rings stacked back-to-back. Interacts with the co-chaperonin GroES.

Its subcellular location is the cytoplasm. The enzyme catalyses ATP + H2O + a folded polypeptide = ADP + phosphate + an unfolded polypeptide.. Functionally, together with its co-chaperonin GroES, plays an essential role in assisting protein folding. The GroEL-GroES system forms a nano-cage that allows encapsulation of the non-native substrate proteins and provides a physical environment optimized to promote and accelerate protein folding. The chain is Chaperonin GroEL from Shewanella denitrificans (strain OS217 / ATCC BAA-1090 / DSM 15013).